The chain runs to 495 residues: UDP-N-acetylmuramoyl-L-alanyl-D-glutamate--2,6-diaminopimelate ligase (495 aa).

Ser-29 contacts UDP-N-acetyl-alpha-D-muramoyl-L-alanyl-D-glutamate. 111 to 117 is an ATP binding site; sequence GTNGKTS. Residues 153 to 154, Ser-180, Gln-186, and Arg-188 each bind UDP-N-acetyl-alpha-D-muramoyl-L-alanyl-D-glutamate; that span reads TT. Lys-220 carries the N6-carboxylysine modification. Meso-2,6-diaminopimelate contacts are provided by residues Arg-384, 408-411, Gly-459, and Glu-463; that span reads DNPR. The Meso-diaminopimelate recognition motif motif lies at 408–411; it reads DNPR.

This sequence belongs to the MurCDEF family. MurE subfamily. It depends on Mg(2+) as a cofactor. Carboxylation is probably crucial for Mg(2+) binding and, consequently, for the gamma-phosphate positioning of ATP.

It localises to the cytoplasm. It carries out the reaction UDP-N-acetyl-alpha-D-muramoyl-L-alanyl-D-glutamate + meso-2,6-diaminopimelate + ATP = UDP-N-acetyl-alpha-D-muramoyl-L-alanyl-gamma-D-glutamyl-meso-2,6-diaminopimelate + ADP + phosphate + H(+). It functions in the pathway cell wall biogenesis; peptidoglycan biosynthesis. Functionally, catalyzes the addition of meso-diaminopimelic acid to the nucleotide precursor UDP-N-acetylmuramoyl-L-alanyl-D-glutamate (UMAG) in the biosynthesis of bacterial cell-wall peptidoglycan. This Xanthomonas campestris pv. campestris (strain 8004) protein is UDP-N-acetylmuramoyl-L-alanyl-D-glutamate--2,6-diaminopimelate ligase.